The primary structure comprises 62 residues: Sec-independent protein translocase protein TatAc (62 aa).

A helical transmembrane segment spans residues 8–28 (ILVILFVGFLVFGPDKLPALG).

It belongs to the TatA/E family. Forms a complex with TatC.

It is found in the cell membrane. In terms of biological role, part of the twin-arginine translocation (Tat) system that transports large folded proteins containing a characteristic twin-arginine motif in their signal peptide across membranes. TatA could form the protein-conducting channel of the Tat system. The polypeptide is Sec-independent protein translocase protein TatAc (Bacillus subtilis (strain 168)).